The chain runs to 215 residues: Adenylate kinase (215 aa).

Residue 10–15 (GAGKGT) coordinates ATP. The interval 30-59 (STGDILRDAVSKGTELGKMAKAIMDRGELV) is NMP. AMP-binding positions include T31, R36, 57 to 59 (ELV), 82 to 85 (GYPR), and Q89. An LID region spans residues 123–160 (NRRVCPNCGKVYNLITLQPKEDEKCDVCGTKLIQRDDD). An ATP-binding site is contributed by R124. C127 and C130 together coordinate Zn(2+). 133–134 (VY) contributes to the ATP binding site. 2 residues coordinate Zn(2+): C147 and C150. Residues R157 and R168 each contribute to the AMP site. Q196 is a binding site for ATP.

It belongs to the adenylate kinase family. Monomer.

The protein resides in the cytoplasm. It carries out the reaction AMP + ATP = 2 ADP. It participates in purine metabolism; AMP biosynthesis via salvage pathway; AMP from ADP: step 1/1. Functionally, catalyzes the reversible transfer of the terminal phosphate group between ATP and AMP. Plays an important role in cellular energy homeostasis and in adenine nucleotide metabolism. This Petrotoga mobilis (strain DSM 10674 / SJ95) protein is Adenylate kinase.